The following is a 145-amino-acid chain: D-aminoacyl-tRNA deacylase (145 aa).

Residues 137–138 (GP) carry the Gly-cisPro motif, important for rejection of L-amino acids motif.

The protein belongs to the DTD family. Homodimer.

The protein resides in the cytoplasm. The catalysed reaction is glycyl-tRNA(Ala) + H2O = tRNA(Ala) + glycine + H(+). It carries out the reaction a D-aminoacyl-tRNA + H2O = a tRNA + a D-alpha-amino acid + H(+). Its function is as follows. An aminoacyl-tRNA editing enzyme that deacylates mischarged D-aminoacyl-tRNAs. Also deacylates mischarged glycyl-tRNA(Ala), protecting cells against glycine mischarging by AlaRS. Acts via tRNA-based rather than protein-based catalysis; rejects L-amino acids rather than detecting D-amino acids in the active site. By recycling D-aminoacyl-tRNA to D-amino acids and free tRNA molecules, this enzyme counteracts the toxicity associated with the formation of D-aminoacyl-tRNA entities in vivo and helps enforce protein L-homochirality. The sequence is that of D-aminoacyl-tRNA deacylase from Serratia proteamaculans (strain 568).